The primary structure comprises 462 residues: UPF0236 protein TTE2489 (462 aa).

This sequence belongs to the UPF0236 family.

The protein is UPF0236 protein TTE2489 of Caldanaerobacter subterraneus subsp. tengcongensis (strain DSM 15242 / JCM 11007 / NBRC 100824 / MB4) (Thermoanaerobacter tengcongensis).